We begin with the raw amino-acid sequence, 405 residues long: Argininosuccinate synthase (405 aa).

ATP contacts are provided by residues 10–18 and Ala37; that span reads AYSGGLDTS. L-citrulline-binding residues include Tyr88 and Ser93. Gly118 lines the ATP pocket. 3 residues coordinate L-aspartate: Thr120, Asn124, and Asp125. Position 124 (Asn124) interacts with L-citrulline. L-citrulline-binding residues include Arg128, Ser179, Ser188, Glu264, and Tyr276.

Belongs to the argininosuccinate synthase family. Type 1 subfamily. In terms of assembly, homotetramer.

The protein localises to the cytoplasm. It carries out the reaction L-citrulline + L-aspartate + ATP = 2-(N(omega)-L-arginino)succinate + AMP + diphosphate + H(+). It functions in the pathway amino-acid biosynthesis; L-arginine biosynthesis; L-arginine from L-ornithine and carbamoyl phosphate: step 2/3. This Pseudomonas entomophila (strain L48) protein is Argininosuccinate synthase.